A 293-amino-acid chain; its full sequence is Decaprenyl diphosphate synthase (293 aa).

The tract at residues 1-24 is disordered; that stretch reads MATTRGKKTYPQLPPAPDDYPTFP. Residue D73 is part of the active site. D73 provides a ligand contact to Mg(2+). Residues 74 to 77, W78, R86, H90, and 118 to 120 each bind substrate; these read GNGR and STE. N121 (proton acceptor) is an active-site residue. Substrate contacts are provided by residues W122, R124, R241, and 247–249; that span reads RAS. E260 is a binding site for Mg(2+).

Belongs to the UPP synthase family. Homodimer. The cofactor is Mg(2+).

The protein localises to the cell membrane. The catalysed reaction is (2Z,6E)-farnesyl diphosphate + 7 isopentenyl diphosphate = (2Z,6Z,10Z,14Z,18Z,22Z,26Z,30Z,34E)-decaprenyl diphosphate + 7 diphosphate. It catalyses the reaction n isopentenyl diphosphate + (2E,6E)-farnesyl diphosphate = a di-trans,poly-cis-polyprenyl diphosphate + n diphosphate. Catalyzes the sequential condensation of isopentenyl diphosphate (IPP) in the cis configuration with (2Z,6E)-farnesyl diphosphate (Z-FPP or EZ-FPP) generating the 50 carbon product trans,polycis-decaprenyl diphosphate. When (2E,6E)-farnesyl diphosphate (E-FPP or EE-FPP) is used in vitro, both primary products decaprenyl diphosphate and heptaprenyl diphosphate are synthesized. It is probably due to the fact that M.smegmatis synthesizes both (2E,6E,10E)-geranylgeranyl diphosphate (EEE-GGPP) and (2E,6E,10Z)-geranylgeranyl diphosphate (EEZ-GGPP). Can also accept many different allylic substrates, including E-geranyl diphosphate (E-GPP), neryl diphosphate (NPP), and all-trans-geranyl-geranyl diphosphate. In Mycolicibacterium smegmatis (strain ATCC 700084 / mc(2)155) (Mycobacterium smegmatis), this protein is Decaprenyl diphosphate synthase (uppS).